We begin with the raw amino-acid sequence, 124 residues long: Large ribosomal subunit protein bL12 (124 aa).

The protein belongs to the bacterial ribosomal protein bL12 family. Homodimer. Part of the ribosomal stalk of the 50S ribosomal subunit. Forms a multimeric L10(L12)X complex, where L10 forms an elongated spine to which 2 to 4 L12 dimers bind in a sequential fashion. Binds GTP-bound translation factors.

Functionally, forms part of the ribosomal stalk which helps the ribosome interact with GTP-bound translation factors. Is thus essential for accurate translation. This is Large ribosomal subunit protein bL12 from Sulfurovum sp. (strain NBC37-1).